A 974-amino-acid polypeptide reads, in one-letter code: Probable proton ATPase 1A (974 aa).

Over residues 1–23 (MSSKKYELDAAAFEDKPESHSDA) the composition is skewed to basic and acidic residues. Residues 1–61 (MSSKKYELDA…ATDLLPPSKG (61 aa)) are disordered. Over 1–92 (MSSKKYELDA…KTPSWLIYVR (92 aa)) the chain is Cytoplasmic. A helical transmembrane segment spans residues 93–112 (GLWGPMPAALWIAIIIEFAL). Over 113–117 (ENWPD) the chain is Extracellular. Residues 118–137 (GAILFAIQIANATIGWYETI) form a helical membrane-spanning segment. The Cytoplasmic segment spans residues 138–264 (KAGDAVAALK…LGNIHVILRR (127 aa)). Residues 265–286 (VMFSLCAISFMLCMCCFIYLLA) form a helical membrane-spanning segment. Over 287–294 (RFYETFRH) the chain is Extracellular. Residues 295–321 (ALQFAVVVLVVSIPIALEIVVTTTLAV) form a helical membrane-spanning segment. At 322-630 (GSKHLSKHKI…AVHGATDAAR (309 aa)) the chain is on the cytoplasmic side. Asp351 serves as the catalytic 4-aspartylphosphate intermediate. Mg(2+) is bound by residues Asp605 and Asp609. Residues 631–651 (AAADMVLTEPGLSVVVEAMLV) form a helical membrane-spanning segment. Residues 652 to 661 (SREVFQRMLS) are Extracellular-facing. Residues 662–684 (FLTYRISATLQLVCFFFIACFSL) form a helical membrane-spanning segment. Residues 685–697 (TPKAYGSVDPHFQ) lie on the Cytoplasmic side of the membrane. Residues 698–712 (FFHLPVLMFMLITLL) form a helical membrane-spanning segment. At 713 to 737 (NDGCLMTIGYDHVIPSERPQKWNLP) the chain is on the extracellular side. Asp714 is a binding site for Mg(2+). Residues 738–761 (VVFVSASILAAVACGSSLMLLWIG) form a helical membrane-spanning segment. Topologically, residues 762–812 (LEGYSSQYYENSWFHRLGLAQLPQGKLVTMMYLKISISDFLTLFSSRTGGH) are cytoplasmic. Residues 813–840 (FFFYMPPSPILFCGAIISLLVSTMAASF) traverse the membrane as a helical segment. Topologically, residues 841 to 868 (WHKSRPDNVLTEGLAWGQTNAEKLLPLW) are extracellular. The chain crosses the membrane as a helical span at residues 869–887 (VWIYCIVWWFVQDVVKVLA). At 888–974 (HICMDAVDLF…VNVYVSRDQK (87 aa)) the chain is on the cytoplasmic side. Basic and acidic residues predominate over residues 950-959 (GLREDTHSPI). The tract at residues 950-974 (GLREDTHSPIEEASPVNVYVSRDQK) is disordered.

Belongs to the cation transport ATPase (P-type) (TC 3.A.3) family. Type IIIA subfamily.

The protein localises to the membrane. It carries out the reaction ATP + H2O + H(+)(in) = ADP + phosphate + 2 H(+)(out). This Leishmania donovani protein is Probable proton ATPase 1A (H1A).